The primary structure comprises 223 residues: Killer cell lectin-like receptor subfamily B member 1B allele B (223 aa).

Residues 1–43 (MDSTTLVYADLNLARIQEPKHDSPPSLSPDTCRCPRWHRLALK) lie on the Cytoplasmic side of the membrane. An ITIM motif motif is present at residues 6–11 (LVYADL). The LCK-binding motif signature appears at 32-35 (CRCP). Residues 44 to 64 (FGCAGLILLVLVVIGLCVLVL) form a helical; Signal-anchor for type II membrane protein membrane-spanning segment. Over 65–223 (SVQKSSVQKI…LNHETPCNDS (159 aa)) the chain is Extracellular. Residues 101-211 (HRDKCFHVSQ…CSSDNRWICQ (111 aa)) enclose the C-type lectin domain. 2 disulfides stabilise this stretch: Cys-122/Cys-210 and Cys-189/Cys-202.

Homodimer; disulfide-linked. Interacts with tyrosine kinase LCK. Binds PTPN6/SHP-1 in a phosphorylation-dependent manner. As to expression, expressed in NK cells and a subset of T-cells.

The protein resides in the membrane. Its function is as follows. Receptor for CLEC2D/OCIL. Ligand-binding contributes to inhibition of cytotoxic natural killer (NK) cells. May mediate MHC class I-independent 'missing-self' recognition of allografts, tumor cells and virus-infected cells. In Mus musculus (Mouse), this protein is Killer cell lectin-like receptor subfamily B member 1B allele B (Klrb1b).